The primary structure comprises 224 residues: Mammalian ependymin-related protein 1 (224 aa).

The first 37 residues, 1 to 37, serve as a signal peptide directing secretion; that stretch reads MLTRAPRRLVQGPRETWLLGGLWVWILCGLGMAGSPG. Disulfide bonds link Cys-42–Cys-172, Cys-88–Cys-222, and Cys-113–Cys-210. 2 N-linked (GlcNAc...) asparagine glycosylation sites follow: Asn-130 and Asn-182.

It belongs to the ependymin family. In terms of assembly, homodimer. Post-translationally, N-glycosylated; the glycan contains mannose-6-phosphate moieties. Detected in brain (at protein level).

It localises to the lysosome lumen. The protein localises to the secreted. Its function is as follows. Binds anionic lipids and gangliosides at acidic pH. This chain is Mammalian ependymin-related protein 1 (Epdr1), found in Rattus norvegicus (Rat).